A 739-amino-acid chain; its full sequence is MWELVETVRSMLNSLHDGEISVSAYDTAWVARVPALDGSNTPQFPMCLNWIMNNQLEDGSWGDRDLFLTYDRICSALACAIALKTWNTGDKIVHKALEFIRKTMPKMELEDSTHMPIGFEIVFPAMIEEAMALELDIDYTAPVLQTIYAERKKKLERIPMNVVQNYPTTLLHSLEGLHKTIDWDKVIKLQSPDGSLLFSPASTACALMHTGNEKCLQYLNNLVKRFNCAVPNVYPVDLFEHLWIVDRLQRLGISRYFTQEIKSALDYVYRYWTDKGIAWARGSPVQDADDTSMAFRLLRSHGYDISPDAFKTFQEGDSFVCFSGQAGQAVTGMYNLYRASQVMFPGETILEEAGSFARKFLEGKRQENQLYDKWIISKDLPGEVEFALDNPMHARLERLATRRYIDQYAADDVWIGKSLYRMPFVNNPIFLELAKADFNMCRALHRKEFQQLERWYDESSLSMFKGFSRSKLEQTFYSAAATIFEPELSPARLIWSQCWFLSLGINEYFDYQGSTKELEDLINNVERWNVNSLGNCSAKVKILFVELYNIVQNHSKQGFLYQGRSIGGALREIWKTWLSSLLQRTKWKMSDNYPTLEEYLKASHSSIEPAVRSTVYFVGETLATGDLKDSAICQMMNTASRLVQDTHTDKVDSSLNSITIYLEENPQLTESEALSQVQALANKNMQKLLYETLQPGALPQACKQLFLNAARIMNVFPGTNKVQAKLSNHVKRVLSQPVL.

K154 lines the substrate pocket. Mg(2+)-binding residues include D287 and D289. The DXDD motif signature appears at 287-290; that stretch reads DADD. A substrate-binding site is contributed by K373.

The protein belongs to the terpene synthase family. Requires Mg(2+) as cofactor.

The enzyme catalyses (2E,6E,10E)-geranylgeranyl diphosphate = (+)-copalyl diphosphate. The protein operates within secondary metabolite biosynthesis; terpenoid biosynthesis. Functionally, monofunctional diterpene synthase converting geranylgeranyl diphosphate to copalyl diphosphate. This chain is Copalyl diphosphate synthase 1 (CPS1), found in Selaginella moellendorffii (Spikemoss).